The primary structure comprises 70 residues: Cold shock-like protein CspH (70 aa).

A CSD domain is found at 7-67 (GIVKTFDRKS…GLRGPTAANV (61 aa)).

The protein resides in the cytoplasm. The protein is Cold shock-like protein CspH (cspH) of Escherichia coli O6:H1 (strain CFT073 / ATCC 700928 / UPEC).